The chain runs to 127 residues: Holo-[acyl-carrier-protein] synthase (127 aa).

The Mg(2+) site is built by D8 and E56.

Belongs to the P-Pant transferase superfamily. AcpS family. The cofactor is Mg(2+).

The protein localises to the cytoplasm. The catalysed reaction is apo-[ACP] + CoA = holo-[ACP] + adenosine 3',5'-bisphosphate + H(+). Transfers the 4'-phosphopantetheine moiety from coenzyme A to a Ser of acyl-carrier-protein. The protein is Holo-[acyl-carrier-protein] synthase of Deinococcus deserti (strain DSM 17065 / CIP 109153 / LMG 22923 / VCD115).